We begin with the raw amino-acid sequence, 96 residues long: Small ribosomal subunit protein bS18 (96 aa).

Residues 1–22 are compositionally biased toward basic and acidic residues; the sequence is MYKDIDSHQRDSRTDGHQDGFK. The disordered stretch occupies residues 1–25; the sequence is MYKDIDSHQRDSRTDGHQDGFKKNP.

It belongs to the bacterial ribosomal protein bS18 family. Part of the 30S ribosomal subunit. Forms a tight heterodimer with protein bS6.

In terms of biological role, binds as a heterodimer with protein bS6 to the central domain of the 16S rRNA, where it helps stabilize the platform of the 30S subunit. The polypeptide is Small ribosomal subunit protein bS18 (Borrelia duttonii (strain Ly)).